The primary structure comprises 91 residues: Large ribosomal subunit protein eL37B (91 aa).

Zn(2+) is bound by residues Cys19, Cys22, Cys34, and Cys37. Residues 19–37 form a C4-type zinc finger; that stretch reads CRRCGKRSFHIQKSTCACC.

This sequence belongs to the eukaryotic ribosomal protein eL37 family. As to quaternary structure, component of the large ribosomal subunit (LSU). Mature yeast ribosomes consist of a small (40S) and a large (60S) subunit. The 40S small subunit contains 1 molecule of ribosomal RNA (18S rRNA) and at least 33 different proteins. The large 60S subunit contains 3 rRNA molecules (25S, 5.8S and 5S rRNA) and at least 46 different proteins. It depends on Zn(2+) as a cofactor.

Its subcellular location is the cytoplasm. Component of the ribosome, a large ribonucleoprotein complex responsible for the synthesis of proteins in the cell. The small ribosomal subunit (SSU) binds messenger RNAs (mRNAs) and translates the encoded message by selecting cognate aminoacyl-transfer RNA (tRNA) molecules. The large subunit (LSU) contains the ribosomal catalytic site termed the peptidyl transferase center (PTC), which catalyzes the formation of peptide bonds, thereby polymerizing the amino acids delivered by tRNAs into a polypeptide chain. The nascent polypeptides leave the ribosome through a tunnel in the LSU and interact with protein factors that function in enzymatic processing, targeting, and the membrane insertion of nascent chains at the exit of the ribosomal tunnel. This is Large ribosomal subunit protein eL37B (rpl3702) from Schizosaccharomyces pombe (strain 972 / ATCC 24843) (Fission yeast).